A 263-amino-acid polypeptide reads, in one-letter code: Oxygen-evolving enhancer protein 2, chloroplastic (263 aa).

The N-terminal 78 residues, 1-78 (MAAASCFHAL…VGTKVSPADA (78 aa)), are a transit peptide targeting the chloroplast. Over residues 14-30 (ARSSSSSLQSSSSRLPA) the composition is skewed to low complexity. The tract at residues 14–34 (ARSSSSSLQSSSSRLPAPIKP) is disordered.

This sequence belongs to the PsbP family.

The protein localises to the plastid. The protein resides in the chloroplast thylakoid membrane. May be involved in the regulation of photosystem II. This chain is Oxygen-evolving enhancer protein 2, chloroplastic, found in Helianthus annuus (Common sunflower).